Consider the following 116-residue polypeptide: Large ribosomal subunit protein uL18 (116 aa).

Belongs to the universal ribosomal protein uL18 family. As to quaternary structure, part of the 50S ribosomal subunit; part of the 5S rRNA/L5/L18/L25 subcomplex. Contacts the 5S and 23S rRNAs.

This is one of the proteins that bind and probably mediate the attachment of the 5S RNA into the large ribosomal subunit, where it forms part of the central protuberance. The polypeptide is Large ribosomal subunit protein uL18 (Azotobacter vinelandii (strain DJ / ATCC BAA-1303)).